A 172-amino-acid chain; its full sequence is L-methionine sulfoximine/L-methionine sulfone acetyltransferase (172 aa).

The 164-residue stretch at 3–166 (ASIRDAGVAD…DLTFMQLNLD (164 aa)) folds into the N-acetyltransferase domain. Residues 75-77 (RPF) and 85-87 (EHS) each bind substrate. Acetyl-CoA-binding positions include 88-90 (VYV), 96-101 (GKGLGV), and asparagine 127.

In terms of assembly, homodimer.

The catalysed reaction is L-methionine sulfoximine + acetyl-CoA = N-acetyl-L-methionine sulfoximine + CoA + H(+). It catalyses the reaction L-methionine sulfone + acetyl-CoA = N-acetyl-L-methionine sulfone + CoA + H(+). Its function is as follows. Plays a role in the resistance against the toxic effects of L-methionine sulfoximine (MSX), a rare amino acid, which inhibits glutamine synthetase (GlnA). Catalyzes the acetylation of L-methionine sulfoximine (MSX). This chain is L-methionine sulfoximine/L-methionine sulfone acetyltransferase, found in Pseudomonas aeruginosa (strain ATCC 15692 / DSM 22644 / CIP 104116 / JCM 14847 / LMG 12228 / 1C / PRS 101 / PAO1).